Here is a 310-residue protein sequence, read N- to C-terminus: Methionyl-tRNA formyltransferase (310 aa).

111-114 is a (6S)-5,6,7,8-tetrahydrofolate binding site; the sequence is SLLP.

This sequence belongs to the Fmt family.

It carries out the reaction L-methionyl-tRNA(fMet) + (6R)-10-formyltetrahydrofolate = N-formyl-L-methionyl-tRNA(fMet) + (6S)-5,6,7,8-tetrahydrofolate + H(+). Attaches a formyl group to the free amino group of methionyl-tRNA(fMet). The formyl group appears to play a dual role in the initiator identity of N-formylmethionyl-tRNA by promoting its recognition by IF2 and preventing the misappropriation of this tRNA by the elongation apparatus. This Nitrobacter hamburgensis (strain DSM 10229 / NCIMB 13809 / X14) protein is Methionyl-tRNA formyltransferase.